The sequence spans 551 residues: Glucans biosynthesis protein D (551 aa).

The segment at residues 1 to 32 (MDRRRFIKGSMAMAAVCGTSGIASLFSQAAFA) is a signal peptide (tat-type signal).

It belongs to the OpgD/OpgG family. In terms of processing, predicted to be exported by the Tat system. The position of the signal peptide cleavage has not been experimentally proven.

The protein resides in the periplasm. Its pathway is glycan metabolism; osmoregulated periplasmic glucan (OPG) biosynthesis. Functionally, probably involved in the control of the structural glucose backbone of osmoregulated periplasmic glucans (OPGs). The sequence is that of Glucans biosynthesis protein D from Shigella dysenteriae serotype 1 (strain Sd197).